A 249-amino-acid chain; its full sequence is Serine 3-dehydrogenase (249 aa).

Residue 6–30 (LITGATSGFGQATAQRFVKEGWKVI) participates in NADP(+) binding. Residue Ser135 coordinates substrate. The Proton acceptor role is filled by Tyr148.

This sequence belongs to the short-chain dehydrogenases/reductases (SDR) family. As to quaternary structure, homotetramer.

The enzyme catalyses L-serine + NADP(+) = aminoacetaldehyde + CO2 + NADPH. Functionally, catalyzes the oxidation of the hydroxyl group of serine to form 2-aminomalonate semialdehyde which is spontaneously converted into 2-aminoacetaldehyde and CO(2). Also acts on D-serine, L-glycerate, D-glycerate and 2-methyl-DL-serine. Does not act on O-methyl-DL-serine and L-threonine. This chain is Serine 3-dehydrogenase (sdh), found in Rhizobium radiobacter (Agrobacterium tumefaciens).